The sequence spans 67 residues: MPARFGKTLIPQPRSRFIKVRCPDCGNEQVTFSHAAMVVRCLVCGRVLAQPTGGKARLAGHVIKVLE.

Positions 22, 25, 41, and 44 each coordinate Zn(2+). The C4-type zinc finger occupies 22–44 (CPDCGNEQVTFSHAAMVVRCLVC).

This sequence belongs to the eukaryotic ribosomal protein eS27 family. Part of the 30S ribosomal subunit. Zn(2+) serves as cofactor.

The sequence is that of Small ribosomal subunit protein eS27 from Pyrobaculum neutrophilum (strain DSM 2338 / JCM 9278 / NBRC 100436 / V24Sta) (Thermoproteus neutrophilus).